The following is a 252-amino-acid chain: Large ribosomal subunit protein uL3 (252 aa).

Q169 is modified (N5-methylglutamine).

This sequence belongs to the universal ribosomal protein uL3 family. As to quaternary structure, part of the 50S ribosomal subunit. Forms a cluster with proteins L14 and L19. Post-translationally, methylated by PrmB.

Its function is as follows. One of the primary rRNA binding proteins, it binds directly near the 3'-end of the 23S rRNA, where it nucleates assembly of the 50S subunit. In Hyphomonas neptunium (strain ATCC 15444), this protein is Large ribosomal subunit protein uL3.